The following is a 446-amino-acid chain: Glutamate-1-semialdehyde 2,1-aminomutase (446 aa).

Lys-264 carries the N6-(pyridoxal phosphate)lysine modification.

The protein belongs to the class-III pyridoxal-phosphate-dependent aminotransferase family. HemL subfamily. Pyridoxal 5'-phosphate serves as cofactor.

Its subcellular location is the cytoplasm. The enzyme catalyses (S)-4-amino-5-oxopentanoate = 5-aminolevulinate. It functions in the pathway porphyrin-containing compound metabolism; protoporphyrin-IX biosynthesis; 5-aminolevulinate from L-glutamyl-tRNA(Glu): step 2/2. This is Glutamate-1-semialdehyde 2,1-aminomutase from Natronomonas pharaonis (strain ATCC 35678 / DSM 2160 / CIP 103997 / JCM 8858 / NBRC 14720 / NCIMB 2260 / Gabara) (Halobacterium pharaonis).